We begin with the raw amino-acid sequence, 303 residues long: Leukocyte immunoglobulin-like receptor subfamily B member 4B (303 aa).

The signal sequence occupies residues 1-23; it reads MIAMLTVLLYLALILEPRTAVQA. Topologically, residues 24–238 are extracellular; that stretch reads GHLPKPIIWA…TEDGLETYQK (215 aa). 2 consecutive Ig-like C2-type domains span residues 42–123 and 124–212; these read YTSV…AYEN and PSLS…KPSN. The cysteines at positions 49 and 98 are disulfide-linked. Residues asparagine 79, asparagine 133, and asparagine 191 are each glycosylated (N-linked (GlcNAc...) asparagine). Cysteine 144 and cysteine 196 are joined by a disulfide. The chain crosses the membrane as a helical span at residues 239-260; the sequence is ILIGVLVSFLLLFFLLLFLILI. At 261 to 303 the chain is on the cytoplasmic side; sequence GYQCRHKNKANASVKNTQSEDNAELNSWNPQNEDPPRELCTPR. Residues 275-292 show a composition bias toward polar residues; sequence KNTQSEDNAELNSWNPQN. Residues 275-303 are disordered; that stretch reads KNTQSEDNAELNSWNPQNEDPPRELCTPR.

As to quaternary structure, monomer and homodimer. As to expression, expressed on mast cells (at protein level). Also expressed at much lower levels on natural killer cells (at protein level).

The protein localises to the cell membrane. In terms of biological role, plays a role in mast cell activation. This Mus musculus (Mouse) protein is Leukocyte immunoglobulin-like receptor subfamily B member 4B.